We begin with the raw amino-acid sequence, 146 residues long: MRVVLQRSKEASVTVDGEIVGQIPFGLTLLVGITHEDTEKDATYIAEKIANLRIFEDESGKMNHSVLDVEGQVLSISQFTLYGDCRKGRRPNFMDAAKPDYAEHLYDFFNEEVRKQGLHVETGKFGAMMDVSLINDGPVTLIVESK.

Residues glycine 137 to proline 138 carry the Gly-cisPro motif, important for rejection of L-amino acids motif.

This sequence belongs to the DTD family. As to quaternary structure, homodimer.

The protein localises to the cytoplasm. It carries out the reaction glycyl-tRNA(Ala) + H2O = tRNA(Ala) + glycine + H(+). It catalyses the reaction a D-aminoacyl-tRNA + H2O = a tRNA + a D-alpha-amino acid + H(+). In terms of biological role, an aminoacyl-tRNA editing enzyme that deacylates mischarged D-aminoacyl-tRNAs. Also deacylates mischarged glycyl-tRNA(Ala), protecting cells against glycine mischarging by AlaRS. Acts via tRNA-based rather than protein-based catalysis; rejects L-amino acids rather than detecting D-amino acids in the active site. By recycling D-aminoacyl-tRNA to D-amino acids and free tRNA molecules, this enzyme counteracts the toxicity associated with the formation of D-aminoacyl-tRNA entities in vivo and helps enforce protein L-homochirality. This Bacillus thuringiensis subsp. konkukian (strain 97-27) protein is D-aminoacyl-tRNA deacylase.